A 213-amino-acid polypeptide reads, in one-letter code: Ribosomal RNA large subunit methyltransferase E (213 aa).

S-adenosyl-L-methionine contacts are provided by Gly-60, Trp-62, Asp-80, Asp-96, and Asp-121. Lys-161 (proton acceptor) is an active-site residue.

Belongs to the class I-like SAM-binding methyltransferase superfamily. RNA methyltransferase RlmE family.

Its subcellular location is the cytoplasm. It catalyses the reaction uridine(2552) in 23S rRNA + S-adenosyl-L-methionine = 2'-O-methyluridine(2552) in 23S rRNA + S-adenosyl-L-homocysteine + H(+). In terms of biological role, specifically methylates the uridine in position 2552 of 23S rRNA at the 2'-O position of the ribose in the fully assembled 50S ribosomal subunit. The protein is Ribosomal RNA large subunit methyltransferase E of Xylella fastidiosa (strain 9a5c).